Consider the following 98-residue polypeptide: Small ribosomal subunit protein uS19 (98 aa).

Positions 77 to 98 (TRTYRGHAGGKAEKGGAAPKRK) are disordered.

This sequence belongs to the universal ribosomal protein uS19 family.

Functionally, protein S19 forms a complex with S13 that binds strongly to the 16S ribosomal RNA. The sequence is that of Small ribosomal subunit protein uS19 from Chlorobium phaeovibrioides (strain DSM 265 / 1930) (Prosthecochloris vibrioformis (strain DSM 265)).